The chain runs to 374 residues: Beta-1,3-N-acetylglucosaminyltransferase lunatic fringe (374 aa).

Residues 1–8 lie on the Cytoplasmic side of the membrane; that stretch reads MLKTYRGK. The helical; Signal-anchor for type II membrane protein transmembrane segment at 9-29 threads the bilayer; it reads VVVSLAGATVTCLGFLLFLSQ. The Lumenal portion of the chain corresponds to 30-374; it reads HQRIQADGMQ…TPWCPPQVAY (345 aa). N-linked (GlcNAc...) asparagine glycosylation is present at Asn40. The interval 80-100 is disordered; sequence RSRREADKPSEAPGAATDAPP. Residue Arg123 participates in substrate binding. An N-linked (GlcNAc...) asparagine glycan is attached at Asn162. 2 cysteine pairs are disulfide-bonded: Cys163/Cys174 and Cys192/Cys255. A substrate-binding site is contributed by Asp196. Asp197 provides a ligand contact to Mn(2+). Asp285 is a catalytic residue. His309 is a Mn(2+) binding site. Residues Cys359 and Cys368 are joined by a disulfide bond.

It belongs to the glycosyltransferase 31 family. Requires Mn(2+) as cofactor. Co(2+) serves as cofactor. A soluble form may be derived from the membrane form by proteolytic processing. As to expression, in the embryo, expressed along the A-P axis of the neural tube, within the lateral plate mesoderm, in the presomitic mesoderm and the somites, in specific rhombomeres of the hindbrain (even-numbered rhombomeres) and in the otic vesicles.

It is found in the golgi apparatus membrane. The catalysed reaction is 3-O-(alpha-L-fucosyl)-L-threonyl-[EGF-like domain protein] + UDP-N-acetyl-alpha-D-glucosamine = 3-O-(N-acetyl-beta-D-glucosaminyl-(1-&gt;3)-alpha-L-fucosyl)-L-threonyl-[EGF-like domain protein] + UDP + H(+). It catalyses the reaction 3-O-(alpha-L-fucosyl)-L-seryl-[EGF-like domain protein] + UDP-N-acetyl-alpha-D-glucosamine = 3-O-(N-acetyl-beta-D-glucosaminyl-(1-&gt;3)-alpha-L-fucosyl)-L-seryl-[EGF-like domain protein] + UDP + H(+). Glycosyltransferase that initiates the elongation of O-linked fucose residues attached to EGF-like repeats in the extracellular domain of Notch molecules. Involved in the correct formation of boundaries in the somites and hindbrain. Required for Delta-Notch-mediated induction of hypochord cells at the lateral borders of the midline precursor domain. The protein is Beta-1,3-N-acetylglucosaminyltransferase lunatic fringe (lfng) of Danio rerio (Zebrafish).